A 710-amino-acid chain; its full sequence is PWWP domain-containing DNA repair factor 3A (710 aa).

The disordered stretch occupies residues Gln106–Leu160. A compositionally biased stretch (basic and acidic residues) spans Arg114–Glu125. Positions Ser128–Ser137 are enriched in low complexity. The residue at position 161 (Ser161) is a Phosphoserine. Disordered regions lie at residues Lys177–Ser204 and Asn230–Pro398. Residues Pro288–Cys297 show a composition bias toward low complexity. A phosphoserine mark is found at Ser374 and Ser375. Over residues Ser375–Arg385 the composition is skewed to polar residues. The PWWP domain occupies Val411–Thr472.

The protein belongs to the PWWP3A family. As to quaternary structure, interacts with TP53BP1 (via BRCT domain); the interaction is not dependent on its phosphorylation status. Binds nucleosomes. Interacts with trimethylated 'Lys-36' of histone H3 (H3K36me3) (in vitro).

It localises to the nucleus. Its function is as follows. Involved in the DNA damage response pathway by contributing to the maintenance of chromatin architecture. Recruited to the vicinity of DNA breaks by TP53BP1 and plays an accessory role to facilitate damage-induced chromatin changes and promoting chromatin relaxation. Required for efficient DNA repair and cell survival following DNA damage. The chain is PWWP domain-containing DNA repair factor 3A from Homo sapiens (Human).